The primary structure comprises 586 residues: Phosphatase and actin regulator 1 (586 aa).

The Nuclear localization signal signature appears at 62–83 (RRRSKFATLGRLFKPWKWRKKK). The stretch at 92 to 117 (AALERKISMRQSREELIKRGVLKEMY) is one RPEL 1 repeat. The disordered stretch occupies residues 373–414 (ECEDDKENVPHETSYDDSSCLYSRDEEEDDDDDDDDEDDDSS). Acidic residues predominate over residues 397–413 (DEEEDDDDDDDDEDDDS). RPEL repeat units follow at residues 428–453 (DSLA…PMQT), 466–491 (TKLT…KPRN), and 504–529 (RRLT…ISFS).

Belongs to the phosphatase and actin regulator family. In terms of assembly, interacts (via RPEL repeats) with ACTA1.

The protein resides in the cytoplasm. The protein localises to the synapse. Its subcellular location is the nucleus. Binds actin monomers (G actin) and plays a role in the reorganization of the actin cytoskeleton and in formation of actin stress fibers. The polypeptide is Phosphatase and actin regulator 1 (phactr1) (Xenopus laevis (African clawed frog)).